Reading from the N-terminus, the 393-residue chain is S-adenosylmethionine synthase (393 aa).

Mg(2+) is bound at residue E9. H15 is an ATP binding site. E43 serves as a coordination point for K(+). L-methionine is bound by residues E56 and Q99. ATP is bound by residues 167-169 (DGK), 235-238 (SGRF), D246, 252-253 (RK), A269, K273, and K277. An L-methionine-binding site is contributed by D246. K277 serves as a coordination point for L-methionine.

The protein belongs to the AdoMet synthase family. Homotetramer. Requires Mn(2+) as cofactor. Mg(2+) serves as cofactor. The cofactor is Co(2+). It depends on K(+) as a cofactor.

The protein localises to the cytoplasm. The enzyme catalyses L-methionine + ATP + H2O = S-adenosyl-L-methionine + phosphate + diphosphate. Its pathway is amino-acid biosynthesis; S-adenosyl-L-methionine biosynthesis; S-adenosyl-L-methionine from L-methionine: step 1/1. In terms of biological role, catalyzes the formation of S-adenosylmethionine from methionine and ATP. The reaction comprises two steps that are both catalyzed by the same enzyme: formation of S-adenosylmethionine (AdoMet) and triphosphate, and subsequent hydrolysis of the triphosphate. The chain is S-adenosylmethionine synthase (SAM) from Camellia sinensis (Tea plant).